The primary structure comprises 548 residues: Biotin-dependent acetyl-/propionyl-coenzyme A carboxylase beta5 subunit (548 aa).

The interval 1-23 (MTSVTDRSAHSAERSTEHTIDIH) is disordered. Basic and acidic residues predominate over residues 7–21 (RSAHSAERSTEHTID). A CoA carboxyltransferase N-terminal domain is found at 25-281 (TAGKLAELHK…NNSTDAPRYQ (257 aa)). A CoA carboxyltransferase C-terminal domain is found at 295–541 (DEDLELDTLI…ERKIAQLPPK (247 aa)).

This sequence belongs to the AccD/PCCB family. The biotin-dependent acyl-CoA carboxylase complex is composed of AccA3, which contains the biotin carboxylase (BC) and biotin carboxyl carrier protein (BCCP) domains, and AccD5, which contains the carboxyl transferase (CT) domain.

The catalysed reaction is N(6)-carboxybiotinyl-L-lysyl-[protein] + acetyl-CoA = N(6)-biotinyl-L-lysyl-[protein] + malonyl-CoA. It carries out the reaction N(6)-carboxybiotinyl-L-lysyl-[protein] + propanoyl-CoA = methylmalonyl-CoA + N(6)-biotinyl-L-lysyl-[protein]. The protein operates within lipid metabolism; mycolic acid biosynthesis. Its function is as follows. Component of a biotin-dependent acyl-CoA carboxylase complex. This subunit transfers the CO2 from carboxybiotin to the CoA ester substrate. When associated with the alpha3 subunit AccA3, is involved in the carboxylation of acetyl-CoA and propionyl-CoA. This is Biotin-dependent acetyl-/propionyl-coenzyme A carboxylase beta5 subunit (accD5) from Mycobacterium tuberculosis (strain CDC 1551 / Oshkosh).